We begin with the raw amino-acid sequence, 69 residues long: Peptide Hact-1 (69 aa).

The N-terminal stretch at 1-21 (MDRKFHLCLLLVILGTIIVQG) is a signal peptide. Positions 22–57 (APLENENDADPDKPQKYRYYLKRATTEKKDNDPAKP) are excised as a propeptide. An intrachain disulfide couples C59 to C68.

In terms of tissue distribution, tentacle (ecto and/or endoderm tissue), and possibly also nematoblasts.

The protein resides in the secreted. It localises to the nematocyst. Functionally, peptide with unknown function. Has a limited effect on human peripheral blood mononuclear cells. Does not show activity against both Gram-positive and Gram-negative bacteria nor is it active on the 26 voltage-gated ion channels tested. The chain is Peptide Hact-1 from Heliofungia actiniformis (Mushroom coral).